The sequence spans 358 residues: Bis(monoacylglycero)phosphate synthase CLN5 (358 aa).

At 1–23 (MAQEVDTAQGAEMRRGAGAARGR) the chain is on the cytoplasmic side. A helical; Signal-anchor for type II membrane protein transmembrane segment spans residues 24–40 (ASWCWALALLWLAVVPG). The Lumenal portion of the chain corresponds to 41–358 (WSRVSGIPSR…PIRNKTLSGL (318 aa)). 2 disulfides stabilise this stretch: Cys70-Cys159 and Cys77-Cys165. The active-site Proton acceptor is the His117. N-linked (GlcNAc...) asparagine glycans are attached at residues Asn130, Asn143, Asn178, and Asn203. Cys231 acts as the Nucleophile; Acyl-thioester intermediate in catalysis. Residues Asn255, Asn271, and Asn281 are each glycosylated (N-linked (GlcNAc...) asparagine). Residues 304 to 343 (FLLSLLQIFDAVIVHKQFYLFYNFEYWFLPMKFPFIKITY) are membrane-anchoring. Asn352 carries N-linked (GlcNAc...) asparagine glycosylation.

Belongs to the CLN5 family. Multimer. Interacts with SORT1, RAB5A and RAB7A. Interacts with PPT1, TPP1, CLN3, CLN6, CLN8, ATP5F1A and ATP5F1B. N-glycosylated with both high mannose and complex type sugars. Glycosylation is important for proper folding and trafficking to the lysosomes. Post-translationally, the type II membrane signal anchor is proteolytically cleaved to produce a mature form that is transported to the lysosomes (Bis(monoacylglycero)phosphate synthase CLN5, secreted form). In terms of processing, can undergo proteolytic cleavage at the C-terminus, probably by a cysteine protease and may involve the removal of approximately 10-15 residues from the C-terminal end. In terms of tissue distribution, ubiquitous.

It localises to the lysosome. The protein resides in the membrane. The catalysed reaction is S-hexadecanoyl-L-cysteinyl-[protein] + H2O = L-cysteinyl-[protein] + hexadecanoate + H(+). It carries out the reaction 2 1-acyl-sn-glycero-3-phospho-(1'-sn-glycerol) = 1-acyl-sn-glycero-3-phospho-(3'-acyl-sn-1'-glycerol) + sn-glycero-3-phospho-(1'-sn-glycerol). The enzyme catalyses 2 1-(9Z-octadecenoyl)-sn-glycero-3-phospho-(1'-sn-glycerol) = 1-(9Z-octadecenoyl)-sn-glycero-3-phospho-(3'-(9Z-octadecenoyl)-1'-sn-glycerol) + sn-glycero-3-phospho-(1'-sn-glycerol). It catalyses the reaction 2 1-octadecanoyl-sn-glycero-3-phospho-(1'-sn-glycerol) = 1-octadecanoyl-sn-glycero-3-phospho-(3'-octadecanoyl-1'-sn-glycerol) + sn-glycero-3-phospho-(1'-sn-glycerol). The catalysed reaction is 2 1-hexadecanoyl-sn-glycero-3-phospho-(1'-sn-glycerol) = 1-hexadecanoyl-sn-glycero-3-phospho-(3'-hexadecanoyl-1'-sn-glycerol) + sn-glycero-3-phospho-(1'-sn-glycerol). It carries out the reaction 2 1-tetradecanoyl-sn-glycero-3-phospho-(1'-sn-glycerol) = 1-tetradecanoyl-sn-glycero-3-phospho-(3'-tetradecanoyl-1'-sn-glycerol) + sn-glycero-3-phospho-(1'-sn-glycerol). Its activity is regulated as follows. Anionic phospholipids activate bis(monoacylglycero)phosphate (BMP) synthase activity. Amiodarone, a cationic amphiphilic drug inhibits BMP synthase activity towards liposomal lysophosphatidylglycerol. Palmostatin B inhibits palmitoyl protein thioesterase activity. Functionally, catalyzes the synthesis of bis(monoacylglycero)phosphate (BMP) via transacylation of 2 molecules of lysophosphatidylglycerol (LPG). BMP also known as lysobisphosphatidic acid plays a key role in the formation of intraluminal vesicles and in maintaining intracellular cholesterol homeostasis. Can use only LPG as the exclusive lysophospholipid acyl donor for base exchange and displays BMP synthase activity towards various LPGs (LPG 14:0, LPG 16:0, LPG 18:0, LPG 18:1) with a higher preference for longer chain lengths. Plays a role in influencing the retrograde trafficking of lysosomal sorting receptors SORT1 and IGF2R from the endosomes to the trans-Golgi network by controlling the recruitment of retromer complex to the endosomal membrane. Regulates the localization and activation of RAB7A which is required to recruit the retromer complex to the endosomal membrane. In terms of biological role, exhibits palmitoyl protein thioesterase (S-depalmitoylation) activity in vitro and most likely plays a role in protein S-depalmitoylation. This chain is Bis(monoacylglycero)phosphate synthase CLN5 (CLN5), found in Homo sapiens (Human).